Here is a 357-residue protein sequence, read N- to C-terminus: Glycerol-3-phosphate dehydrogenase [NAD(P)+] (357 aa).

Positions 30, 31, 51, and 124 each coordinate NADPH. Residues lysine 124 and glycine 152 each coordinate sn-glycerol 3-phosphate. Alanine 156 is a binding site for NADPH. Positions 207, 260, 270, 271, and 272 each coordinate sn-glycerol 3-phosphate. The active-site Proton acceptor is lysine 207. Arginine 271 contributes to the NADPH binding site. An NADPH-binding site is contributed by glutamate 297.

Belongs to the NAD-dependent glycerol-3-phosphate dehydrogenase family.

The protein resides in the cytoplasm. The enzyme catalyses sn-glycerol 3-phosphate + NAD(+) = dihydroxyacetone phosphate + NADH + H(+). It catalyses the reaction sn-glycerol 3-phosphate + NADP(+) = dihydroxyacetone phosphate + NADPH + H(+). Its pathway is membrane lipid metabolism; glycerophospholipid metabolism. Its function is as follows. Catalyzes the reduction of the glycolytic intermediate dihydroxyacetone phosphate (DHAP) to sn-glycerol 3-phosphate (G3P), the key precursor for phospholipid synthesis. The protein is Glycerol-3-phosphate dehydrogenase [NAD(P)+] of Acinetobacter baylyi (strain ATCC 33305 / BD413 / ADP1).